Consider the following 41-residue polypeptide: Ranatuerin-2PLg (41 aa).

The propeptide occupies 1 to 11; it reads DDGVEMTEEEV. An intrachain disulfide couples cysteine 36 to cysteine 41.

It belongs to the frog skin active peptide (FSAP) family. Ranatuerin subfamily.

It localises to the secreted. Antimicrobial peptide. This chain is Ranatuerin-2PLg, found in Lithobates palustris (Pickerel frog).